The following is a 549-amino-acid chain: Capsid vertex component 2 (549 aa).

An interaction with major capsid protein/MCP region spans residues 1–54 (MLTSERSYLRYPKNRRWTEAGRFWAPHPENVLFIHKPTMEETRRVALGLRSQLV).

It belongs to the herpesviridae CVC2 protein family. Heterodimerizes with CVC1. Interacts with major capsid protein/MCP and triplex capsid protein 1/TRX1 at the pentamer vertices. Interacts with the large tegument protein/LTP.

It localises to the virion. Its subcellular location is the host nucleus. Functionally, capsid vertex-specific component that plays a role during viral DNA encapsidation, assuring correct genome cleavage and presumably stabilizing capsids that contain full-length viral genomes. Participates in the interaction between the capsid and the tegument through interaction with the large tegument protein/LTP. The protein is Capsid vertex component 2 of Human herpesvirus 8 type P (isolate GK18) (HHV-8).